The primary structure comprises 92 residues: Small ribosomal subunit protein uS19 (92 aa).

Belongs to the universal ribosomal protein uS19 family.

In terms of biological role, protein S19 forms a complex with S13 that binds strongly to the 16S ribosomal RNA. This is Small ribosomal subunit protein uS19 from Exiguobacterium sibiricum (strain DSM 17290 / CCUG 55495 / CIP 109462 / JCM 13490 / 255-15).